The primary structure comprises 138 residues: Large ribosomal subunit protein uL16 (138 aa).

Over residues 1–17 (MLIPRKVKHRKQHHPRQ) the composition is skewed to basic residues. The tract at residues 1–22 (MLIPRKVKHRKQHHPRQRGIAS) is disordered.

The protein belongs to the universal ribosomal protein uL16 family. Part of the 50S ribosomal subunit.

Functionally, binds 23S rRNA and is also seen to make contacts with the A and possibly P site tRNAs. In Mycobacterium avium (strain 104), this protein is Large ribosomal subunit protein uL16.